The following is a 199-amino-acid chain: Large ribosomal subunit protein bL25 (199 aa).

Positions 1-21 are disordered; it reads MNIEKTLSVQKREGYGKGPSG.

Belongs to the bacterial ribosomal protein bL25 family. CTC subfamily. Part of the 50S ribosomal subunit; part of the 5S rRNA/L5/L18/L25 subcomplex. Contacts the 5S rRNA. Binds to the 5S rRNA independently of L5 and L18.

Its function is as follows. This is one of the proteins that binds to the 5S RNA in the ribosome where it forms part of the central protuberance. The polypeptide is Large ribosomal subunit protein bL25 (Desulfovibrio desulfuricans (strain ATCC 27774 / DSM 6949 / MB)).